A 437-amino-acid chain; its full sequence is Enolase (437 aa).

2 residues coordinate substrate: H160 and E169. E212 serves as the catalytic Proton donor. Residues D247, E296, and D321 each coordinate Mg(2+). The substrate site is built by E296 and D321. Residue K346 is the Proton acceptor of the active site. Residues 373–376 (SHRS) and K397 contribute to the substrate site.

This sequence belongs to the enolase family. As to quaternary structure, homodimer. Mg(2+) serves as cofactor.

It is found in the cytoplasm. The catalysed reaction is (2R)-2-phosphoglycerate = phosphoenolpyruvate + H2O. It participates in carbohydrate degradation; glycolysis; pyruvate from D-glyceraldehyde 3-phosphate: step 4/5. This chain is Enolase (ENO), found in Eremothecium gossypii (strain ATCC 10895 / CBS 109.51 / FGSC 9923 / NRRL Y-1056) (Yeast).